A 278-amino-acid polypeptide reads, in one-letter code: Neuronal membrane glycoprotein M6-a (278 aa).

At Met-1 the chain carries N-acetylmethionine. The Cytoplasmic segment spans residues 1 to 22; that stretch reads MEENMEEGQTQKGCFECCIKCL. Residues 23-43 form a helical membrane-spanning segment; that stretch reads GGIPYASLIATILLYAGVALF. Residues 44 to 84 are Extracellular-facing; sequence CGCGHEALSGTVNILQTYFELARTAGDTLDVFTMIDIFKYV. The chain crosses the membrane as a helical span at residues 85–105; sequence IYGIAAAFFVYGILLMVEGFF. The Cytoplasmic portion of the chain corresponds to 106–127; the sequence is TTGAIKDLYGDFKITTCGRCVS. The helical transmembrane segment at 128–148 threads the bilayer; that stretch reads AWFIMLTYLFMLAWLGVTAFT. Residues 149-213 lie on the Extracellular side of the membrane; it reads SLPVYMYFNV…STELNMTFHL (65 aa). A glycan (N-linked (GlcNAc...) asparagine) is linked at Asn-164. Cys-174 and Cys-192 are joined by a disulfide. A glycan (N-linked (GlcNAc...) asparagine) is linked at Asn-208. The chain crosses the membrane as a helical span at residues 214-234; it reads FIVALAGAGAAVIAMVHYLMV. Over 235-278 the chain is Cytoplasmic; it reads LSANWAYVKDACRMQKYEDIKSKEEQELHDIHSTRSKERLNAYT. Ser-256 is subject to Phosphoserine. Thr-278 is modified (phosphothreonine).

It belongs to the myelin proteolipid protein family. In terms of assembly, interacts with OPRM1. Interacts with palmitoyltransferase ZDHHC17/HIP14; the interaction leads to palmitoylation of GPM6A. Post-translationally, N-glycosylated. In terms of processing, palmitoylated by ZDHHC17/HIP14. As to expression, widely expressed in the CNS. Found especially in the granule cell layer of the cerebellum but not in the molecular layer or white matter. Expressed in the immature embryonic retina including the nerve fiber layer (NFL), inner plexiform layer (IPL), and outer plexiform layer (OPL). Weakly expressed in processes of Mueller glia cells.

Its subcellular location is the cell membrane. The protein localises to the cell projection. It is found in the axon. The protein resides in the growth cone. It localises to the dendritic spine. Its subcellular location is the filopodium. The protein localises to the neuron projection. Involved in neuronal differentiation, including differentiation and migration of neuronal stem cells. Plays a role in neuronal plasticity and is involved in neurite and filopodia outgrowth, filopodia motility and probably synapse formation. Gpm6a-induced filopodia formation involves mitogen-activated protein kinase (MAPK) and Src signaling pathways. Conflictingly, PubMed:22162747 reports that induced cellular protrusions are simple membrane-wrapped tubules without actin or tubulin-based cytoskeletons and with Gpm6a gliding along membrane edges indicative for a function in actin-independent membrane deformation. May be involved in neuronal NGF-dependent Ca(2+) influx. May be involved in regulation of endocytosis and intracellular trafficking of G-protein-coupled receptors (GPCRs); enhances internalization and recycling of mu-type opioid receptor. This chain is Neuronal membrane glycoprotein M6-a (Gpm6a), found in Mus musculus (Mouse).